The sequence spans 441 residues: uncharacterized protein (441 aa).

The span at 121 to 143 (TLSPSIVSEQQQQQQQQQQQQQQ) shows a compositional bias: low complexity. Disordered stretches follow at residues 121-146 (TLSP…QAIS) and 371-392 (SDAD…TAPN). A compositionally biased stretch (polar residues) spans 382 to 391 (PTSAPSTTAP).

This is an uncharacterized protein from Dictyostelium discoideum (Social amoeba).